The primary structure comprises 397 residues: Tryptophan synthase beta chain (397 aa).

Position 87 is an N6-(pyridoxal phosphate)lysine (Lys87).

It belongs to the TrpB family. Tetramer of two alpha and two beta chains. It depends on pyridoxal 5'-phosphate as a cofactor.

It carries out the reaction (1S,2R)-1-C-(indol-3-yl)glycerol 3-phosphate + L-serine = D-glyceraldehyde 3-phosphate + L-tryptophan + H2O. It participates in amino-acid biosynthesis; L-tryptophan biosynthesis; L-tryptophan from chorismate: step 5/5. Its function is as follows. The beta subunit is responsible for the synthesis of L-tryptophan from indole and L-serine. The sequence is that of Tryptophan synthase beta chain from Escherichia coli O45:K1 (strain S88 / ExPEC).